Consider the following 262-residue polypeptide: Small ribosomal subunit protein uS3 (262 aa).

The 69-residue stretch at V39–R107 folds into the KH type-2 domain. The segment at N211–E262 is disordered. Basic and acidic residues predominate over residues E221–G239.

Belongs to the universal ribosomal protein uS3 family. Part of the 30S ribosomal subunit. Forms a tight complex with proteins S10 and S14.

Its function is as follows. Binds the lower part of the 30S subunit head. Binds mRNA in the 70S ribosome, positioning it for translation. The polypeptide is Small ribosomal subunit protein uS3 (Ralstonia pickettii (strain 12J)).